Reading from the N-terminus, the 175-residue chain is S-fimbrial protein subunit SfaG (175 aa).

The first 27 residues, M1 to A27, serve as a signal peptide directing secretion. Cysteines 43 and 83 form a disulfide.

It belongs to the fimbrial protein family.

It localises to the fimbrium. Fimbriae (also called pili), polar filaments radiating from the surface of the bacterium to a length of 0.5-1.5 micrometers and numbering 100-300 per cell, enable bacteria to colonize the epithelium of specific host organs. Its function is as follows. A minor fimbrial subunit. This protein is necessary for full expression of S-specific binding. S-fimbrial adhesins enable pathogenic E.coli causing urinary-tract infections or newborn meningitis to attach to glycoproteins terminating with alpha-sialic acid-(2-3)-beta-Gal. This Escherichia coli O6:K15:H31 (strain 536 / UPEC) protein is S-fimbrial protein subunit SfaG (sfaG).